A 131-amino-acid chain; its full sequence is Small ribosomal subunit protein uS9c (131 aa).

The protein belongs to the universal ribosomal protein uS9 family.

The protein localises to the plastid. It is found in the chloroplast. The polypeptide is Small ribosomal subunit protein uS9c (rps9) (Emiliania huxleyi (Coccolithophore)).